The following is a 243-amino-acid chain: UPF0246 protein Sez_1855 (243 aa).

Belongs to the UPF0246 family.

In Streptococcus equi subsp. zooepidemicus (strain MGCS10565), this protein is UPF0246 protein Sez_1855.